Here is a 901-residue protein sequence, read N- to C-terminus: Protein translocase subunit SecA (901 aa).

Residues glutamine 87, 105-109 (GEGKT), and aspartate 512 contribute to the ATP site. The segment at 859–901 (HQDDDSAAAAALAAQTGERKVGRNDPCPCGSGKKYKQCHGRLQ) is disordered. 4 residues coordinate Zn(2+): cysteine 885, cysteine 887, cysteine 896, and histidine 897. Basic residues predominate over residues 891–901 (KKYKQCHGRLQ).

It belongs to the SecA family. In terms of assembly, monomer and homodimer. Part of the essential Sec protein translocation apparatus which comprises SecA, SecYEG and auxiliary proteins SecDF-YajC and YidC. It depends on Zn(2+) as a cofactor.

It localises to the cell inner membrane. The protein localises to the cytoplasm. It catalyses the reaction ATP + H2O + cellular proteinSide 1 = ADP + phosphate + cellular proteinSide 2.. Part of the Sec protein translocase complex. Interacts with the SecYEG preprotein conducting channel. Has a central role in coupling the hydrolysis of ATP to the transfer of proteins into and across the cell membrane, serving both as a receptor for the preprotein-SecB complex and as an ATP-driven molecular motor driving the stepwise translocation of polypeptide chains across the membrane. The protein is Protein translocase subunit SecA of Escherichia coli O127:H6 (strain E2348/69 / EPEC).